Here is a 266-residue protein sequence, read N- to C-terminus: F-actin-capping protein subunit alpha (266 aa).

The protein belongs to the F-actin-capping protein alpha subunit family. In terms of assembly, heterodimer of an alpha and a beta subunit.

It is found in the cytoplasm. The protein resides in the cytoskeleton. F-actin-capping proteins bind in a Ca(2+)-independent manner to the fast growing ends of actin filaments (barbed end) thereby blocking the exchange of subunits at these ends. Unlike other capping proteins (such as gelsolin and severin), these proteins do not sever actin filaments. The chain is F-actin-capping protein subunit alpha (CAP1) from Debaryomyces hansenii (strain ATCC 36239 / CBS 767 / BCRC 21394 / JCM 1990 / NBRC 0083 / IGC 2968) (Yeast).